Reading from the N-terminus, the 910-residue chain is Protein translocase subunit SecA 1 (910 aa).

Residues Q86, 104-108 (GEGKT), and D512 each bind ATP. Zn(2+)-binding residues include C894, C896, C905, and H906.

The protein belongs to the SecA family. In terms of assembly, monomer and homodimer. Part of the essential Sec protein translocation apparatus which comprises SecA, SecYEG and auxiliary proteins SecDF-YajC and YidC. Zn(2+) serves as cofactor.

The protein localises to the cell inner membrane. It is found in the cytoplasm. It catalyses the reaction ATP + H2O + cellular proteinSide 1 = ADP + phosphate + cellular proteinSide 2.. In terms of biological role, part of the Sec protein translocase complex. Interacts with the SecYEG preprotein conducting channel. Has a central role in coupling the hydrolysis of ATP to the transfer of proteins into and across the cell membrane, serving both as a receptor for the preprotein-SecB complex and as an ATP-driven molecular motor driving the stepwise translocation of polypeptide chains across the membrane. The chain is Protein translocase subunit SecA 1 from Bordetella avium (strain 197N).